The following is a 1024-amino-acid chain: MTMITDSLAVVLQRRDWENPGVTQLNRLAAHPPFASWRNSEEARTDRPSQQLRSLNGEWRFAWFPAPEAVPESWLECDLPEADTVVVPSNWQMHGYDAPIYTNVTYPITVNPPFVPTENPTGCYSLTFNVDESWLQEGQTRIIFDGVNSAFHLWCNGRWVGYGQDSRLPSEFDLSAFLRAGENRLAVMVLRWSDGSYLEDQDMWRMSGIFRDVSLLHKPTTQISDFHVATRFNDDFSRAVLEAEVQMCGELRDYLRVTVSLWQGETQVASGTAPFGGEIIDERGGYADRVTLRLNVENPKLWSAEIPNLYRAVVELHTADGTLIEAEACDVGFREVRIENGLLLLNGKPLLIRGVNRHEHHPLHGQVMDEQTMVQDILLMKQNNFNAVRCSHYPNHPLWYTLCDRYGLYVVDEANIETHGMVPMNRLTDDPRWLPAMSERVTRMVQRDRNHPSVIIWSLGNESGHGANHDALYRWIKSVDPSRPVQYEGGGADTTATDIICPMYARVDEDQPFPAVPKWSIKKWLSLPGETRPLILCEYAHAMGNSLGGFAKYWQAFRQYPRLQGGFVWDWVDQSLIKYDENGNPWSAYGGDFGDTPNDRQFCMNGLVFADRTPHPALTEAKHQQQFFQFRLSGQTIEVTSEYLFRHSDNELLHWMVALDGKPLASGEVPLDVAPQGKQLIELPELPQPESAGQLWLTVRVVQPNATAWSEAGHISAWQQWRLAENLSVTLPAASHAIPHLTTSEMDFCIELGNKRWQFNRQSGFLSQMWIGDKKQLLTPLRDQFTRAPLDNDIGVSEATRIDPNAWVERWKAAGHYQAEAALLQCTADTLADAVLITTAHAWQHQGKTLFISRKTYRIDGSGQMAITVDVEVASDTPHPARIGLNCQLAQVAERVNWLGLGPQENYPDRLTAACFDRWDLPLSDMYTPYVFPSENGLRCGTRELNYGPHQWRGDFQFNISRYSQQQLMETSHRHLLHAEEGTWLNIDGFHMGIGGDDSWSPSVSAEFQLSAGRYHYQLVWCQK.

Positions 103 and 202 each coordinate substrate. Aspartate 202 contributes to the Na(+) binding site. Mg(2+) is bound by residues glutamate 417, histidine 419, and glutamate 462. Residues glutamate 462 and 538 to 541 contribute to the substrate site; that span reads EYAH. Catalysis depends on glutamate 462, which acts as the Proton donor. The active-site Nucleophile is the glutamate 538. Asparagine 598 contacts Mg(2+). Na(+) is bound by residues phenylalanine 602 and asparagine 605. Substrate-binding residues include asparagine 605 and tryptophan 1000.

Belongs to the glycosyl hydrolase 2 family. As to quaternary structure, homotetramer. Mg(2+) serves as cofactor. Mn(2+) is required as a cofactor. Requires Na(+) as cofactor.

The catalysed reaction is Hydrolysis of terminal non-reducing beta-D-galactose residues in beta-D-galactosides.. Its activity is regulated as follows. Inhibited by phenylethyl thio-beta-D-galactoside (PETG), isopropyl thio-beta-D-galactoside (IPTG), L-ribose, D-galactonolactone, lactose and 2-amino-D-galactose. This chain is Beta-galactosidase (lacZ), found in Escherichia coli (strain K12).